The sequence spans 476 residues: Protein transport protein Sec61 subunit alpha-like 1 (476 aa).

Over 2–33 (AIKFLEVIKPFCAVLPEIQKPERKIQFREKVL) the chain is Cytoplasmic. Residues 34–53 (WTAITLFIFLVCCQIPLFGI) traverse the membrane as a helical segment. The Lumenal portion of the chain corresponds to 54–76 (MSSDSADPFYWMRVILASNRGTL). The chain crosses the membrane as a helical span at residues 77-96 (MELGISPIVTSGLIMQLLAG). Residues 97–117 (AKIIEVGDTPKDRALFNGAQK) lie on the Cytoplasmic side of the membrane. Residues 118–138 (LFGMIITIGQAIVYVMTGMYG) traverse the membrane as a helical segment. Over 139–144 (DPSEMG) the chain is Lumenal. Residues 145 to 165 (AGICLLIIIQLFVAGLIVLLL) form a helical membrane-spanning segment. Over 166–172 (DELLQKG) the chain is Cytoplasmic. A helical membrane pass occupies residues 173 to 193 (YGLGSGISLFIATNICETIVW). The Lumenal segment spans residues 194 to 240 (KAFSPTTVNTGRGTEFEGAIIALFHLLATRTDKVRALREAFYRQNLP). The chain crosses the membrane as a helical span at residues 241-261 (NLMNLIATVFVFAVVIYFQGF). Topologically, residues 262–288 (RVDLPIKSARYRGQYNTYPIKLFYTSN) are cytoplasmic. Residues 289–309 (IPIILQSALVSNLYVISQMLS) traverse the membrane as a helical segment. Residues 310–354 (TRFSGNFLVNLLGTWSDTSSGGPARAYPVGGLCYYLSPPESFGSV) lie on the Lumenal side of the membrane. Residues 355-375 (LDDPVHAVIYIVFMLGSCAFF) traverse the membrane as a helical segment. Residues 376–420 (SKTWIEVSGSSAKDVAKQLKEQQMVMRGHRETSMVHELNRYIPTA) lie on the Cytoplasmic side of the membrane. A helical membrane pass occupies residues 421–441 (AAFGGLCIGGLSVMADFLGAI). Topologically, residues 442-445 (GSGT) are lumenal. Residues 446–462 (GILLAVTIIYQYFEIFV) form a helical membrane-spanning segment. Over 463–476 (KEQSEVGSMGALLF) the chain is Cytoplasmic.

Belongs to the SecY/SEC61-alpha family. The SEC61 channel-forming translocon complex consists of channel-forming core components SEC61A1, SEC61B and SEC61G and different auxiliary components such as SEC62 and SEC63. The SEC61 channel associates with the multi-pass translocon (MPT) complex.

It localises to the endoplasmic reticulum membrane. Its function is as follows. Component of SEC61 channel-forming translocon complex that mediates transport of signal peptide-containing precursor polypeptides across the endoplasmic reticulum (ER). Forms a ribosome receptor and a gated pore in the ER membrane, both functions required for cotranslational translocation of nascent polypeptides. May cooperate with auxiliary protein SEC62, SEC63 and HSPA5/BiP to enable post-translational transport of small presecretory proteins. The SEC61 channel is also involved in ER membrane insertion of transmembrane proteins: it mediates membrane insertion of the first few transmembrane segments of proteins, while insertion of subsequent transmembrane regions of multi-pass membrane proteins is mediated by the multi-pass translocon (MPT) complex. Plays a role in the pronephric kidney tubule development. This Danio rerio (Zebrafish) protein is Protein transport protein Sec61 subunit alpha-like 1 (sec61al1).